The following is a 166-amino-acid chain: Lipoprotein signal peptidase (166 aa).

4 consecutive transmembrane segments (helical) span residues 9-29 (AGGS…FDQL), 37-57 (VFAY…LVYN), 71-91 (WQRW…CYLL), and 100-120 (FCTA…DRLL). Active-site residues include Asp-126 and Asp-144. Residues 136-156 (HWPAFNLADSAITIGAALLVF) traverse the membrane as a helical segment.

It belongs to the peptidase A8 family.

It is found in the cell inner membrane. It carries out the reaction Release of signal peptides from bacterial membrane prolipoproteins. Hydrolyzes -Xaa-Yaa-Zaa-|-(S,diacylglyceryl)Cys-, in which Xaa is hydrophobic (preferably Leu), and Yaa (Ala or Ser) and Zaa (Gly or Ala) have small, neutral side chains.. It participates in protein modification; lipoprotein biosynthesis (signal peptide cleavage). This protein specifically catalyzes the removal of signal peptides from prolipoproteins. The sequence is that of Lipoprotein signal peptidase from Paraburkholderia phymatum (strain DSM 17167 / CIP 108236 / LMG 21445 / STM815) (Burkholderia phymatum).